The chain runs to 306 residues: Methionyl-tRNA formyltransferase (306 aa).

Position 110–113 (110–113) interacts with (6S)-5,6,7,8-tetrahydrofolate; that stretch reads SLLP.

Belongs to the Fmt family.

It carries out the reaction L-methionyl-tRNA(fMet) + (6R)-10-formyltetrahydrofolate = N-formyl-L-methionyl-tRNA(fMet) + (6S)-5,6,7,8-tetrahydrofolate + H(+). In terms of biological role, attaches a formyl group to the free amino group of methionyl-tRNA(fMet). The formyl group appears to play a dual role in the initiator identity of N-formylmethionyl-tRNA by promoting its recognition by IF2 and preventing the misappropriation of this tRNA by the elongation apparatus. In Brucella melitensis biotype 2 (strain ATCC 23457), this protein is Methionyl-tRNA formyltransferase.